Here is a 715-residue protein sequence, read N- to C-terminus: ATP-dependent DNA helicase Hel308 (715 aa).

ATP-binding positions include glutamine 35 and 53–60 (SPTGSGKT). Residues 40 to 203 (KKGLLDGNRL…WLGAEPVATN (164 aa)) form the Helicase ATP-binding domain. Positions 152–155 (DELH) match the DEAH box motif. The Helicase C-terminal domain occupies 236–442 (HGDDAIIAYT…ERAFYTFLLG (207 aa)).

This sequence belongs to the helicase family. Hel308 subfamily. Monomer. Interacts with PINA ATPase which decreases both DNA helicase activities of this protein.

It catalyses the reaction Couples ATP hydrolysis with the unwinding of duplex DNA by translocating in the 3'-5' direction.. It carries out the reaction ATP + H2O = ADP + phosphate + H(+). The enzyme catalyses Couples ATP hydrolysis with the unwinding of duplex DNA at the replication fork by translocating in the 5'-3' direction. This creates two antiparallel DNA single strands (ssDNA). The leading ssDNA polymer is the template for DNA polymerase III holoenzyme which synthesizes a continuous strand.. Its activity is regulated as follows. PINA inhibits the (weak) 5'-3' but not the 3'-5' helicase activity of this protein on overhang substrates. Its function is as follows. DNA-dependent ATPase and 3'-5' DNA helicase that may be involved in repair of stalled replication forks. Has predominantly 3'-5' helicase activity but also a weak 5'-3' helicase activity. Has the ability to unwind replication forks, preferentially removing the lagging strand. Hjc, Hjm (Hel308) and branch migration ATPase PINA coordinate HJ migration and cleavage of replication forks in a coordinated way. In Saccharolobus islandicus (strain REY15A) (Sulfolobus islandicus), this protein is ATP-dependent DNA helicase Hel308.